Here is a 316-residue protein sequence, read N- to C-terminus: NAD kinase 1 (316 aa).

D67 functions as the Proton acceptor in the catalytic mechanism. 67-68 (DG) serves as a coordination point for NAD(+). Positions 132-151 (RSAEERADAPTPLQQPDVED) are disordered. NAD(+) is bound by residues 160 to 161 (ND), R190, and D192.

Belongs to the NAD kinase family. A divalent metal cation serves as cofactor.

It localises to the cytoplasm. The catalysed reaction is NAD(+) + ATP = ADP + NADP(+) + H(+). Involved in the regulation of the intracellular balance of NAD and NADP, and is a key enzyme in the biosynthesis of NADP. Catalyzes specifically the phosphorylation on 2'-hydroxyl of the adenosine moiety of NAD to yield NADP. This chain is NAD kinase 1, found in Parasynechococcus marenigrum (strain WH8102).